The chain runs to 379 residues: Alcohol dehydrogenase class-2 isozyme 1 (379 aa).

7 residues coordinate Zn(2+): C47, H69, C99, C102, C105, C113, and C176. Residues 205-210, D229, K234, 298-300, and R374 each bind NAD(+); these read GLGGVG and VGV.

It belongs to the zinc-containing alcohol dehydrogenase family. Class-II subfamily. In terms of assembly, homodimer. Requires Zn(2+) as cofactor.

It localises to the cytoplasm. The enzyme catalyses a primary alcohol + NAD(+) = an aldehyde + NADH + H(+). It carries out the reaction a secondary alcohol + NAD(+) = a ketone + NADH + H(+). This chain is Alcohol dehydrogenase class-2 isozyme 1 (ADH2-1), found in Oryctolagus cuniculus (Rabbit).